Here is a 105-residue protein sequence, read N- to C-terminus: Small ribosomal subunit protein uS10 (105 aa).

The protein belongs to the universal ribosomal protein uS10 family. In terms of assembly, part of the 30S ribosomal subunit.

Its function is as follows. Involved in the binding of tRNA to the ribosomes. In Picosynechococcus sp. (strain ATCC 27264 / PCC 7002 / PR-6) (Agmenellum quadruplicatum), this protein is Small ribosomal subunit protein uS10.